The sequence spans 1323 residues: PAS domain-containing serine/threonine-protein kinase (1323 aa).

An N-acetylmethionine modification is found at methionine 1. Position 19 is a phosphoserine (serine 19). The segment at 20–47 (LPLPVSAEGPAAQTTAEPSRSFSSAHRH) is disordered. Polar residues predominate over residues 31–43 (AQTTAEPSRSFSS). A Phosphothreonine modification is found at threonine 34. PAS domains follow at residues 119–190 (SSPL…MEAD) and 335–402 (YRAS…SLQL). Position 582 is a phosphoserine (serine 582). A disordered region spans residues 837–857 (AASDRESPGHVPSTLDAGPED). Serine 939 is modified (phosphoserine). The Protein kinase domain maps to 999 to 1251 (YSTMSPLGSG…LEKLVTDPWV (253 aa)). ATP is bound by residues 1005-1013 (LGSGAFGFV), lysine 1028, and 1082-1089 (EKHGSGLD). The Proton acceptor role is filled by aspartate 1128. Aspartate 1146 is an ATP binding site. 2 positions are modified to phosphothreonine; by autocatalysis: threonine 1161 and threonine 1165. Residues 1298 to 1323 (CGGPVPGEAPNGQGCLHPGDPRLLTS) are disordered.

This sequence belongs to the protein kinase superfamily. CAMK Ser/Thr protein kinase family. In terms of processing, autophosphorylated on Thr-1161 and Thr-1165. Autophosphorylation is activated by phospholipids. In terms of tissue distribution, ubiquitously expressed, with slightly higher expression in brain, prostate and testis. Reduced expression was found in placenta. Present in germ cells of testis and in the midpiece of sperm tails (at protein level).

The protein localises to the cytoplasm. It is found in the nucleus. It carries out the reaction L-seryl-[protein] + ATP = O-phospho-L-seryl-[protein] + ADP + H(+). The catalysed reaction is L-threonyl-[protein] + ATP = O-phospho-L-threonyl-[protein] + ADP + H(+). Protein kinase activity is inhibited by the first PAS domain: binding of an unidentified ligand desinhibits the protein kinase activity. May be activated by autophosphorylation on Thr-1161 and Thr-1165. The activating role of autophosphorylation at Thr-1161 is unclear: according to a report, autophosphorylation at Thr-1161 does not play a major role in activation. Autophosphorylation is enhanced upon phosphatidylinositol monophosphate (phosphatidylinositol 4-phosphate) binding and inhibited upon phosphatidylinositol bi- and tri-phosphate binding. In contrast, phosphorylation of target proteins is inhibited upon all phosphatidylinositol-binding (phosphatidylinositol mono- bi- and tri-phosphate). Serine/threonine-protein kinase involved in energy homeostasis and protein translation. Phosphorylates EEF1A1, GYS1, PDX1 and RPS6. Probably plays a role under changing environmental conditions (oxygen, glucose, nutrition), rather than under standard conditions. Acts as a sensor involved in energy homeostasis: regulates glycogen synthase synthesis by mediating phosphorylation of GYS1, leading to GYS1 inactivation. May be involved in glucose-stimulated insulin production in pancreas and regulation of glucagon secretion by glucose in alpha cells; however such data require additional evidences. May play a role in regulation of protein translation by phosphorylating EEF1A1, leading to increase translation efficiency. May also participate in respiratory regulation. This Homo sapiens (Human) protein is PAS domain-containing serine/threonine-protein kinase (PASK).